Consider the following 248-residue polypeptide: Tyrosine recombinase XerD-like (248 aa).

The 72-residue stretch at 1-72 (MIAFIEPFLA…TVNQFLYYLY (72 aa)) folds into the Core-binding (CB) domain. Residues 92–248 (SLKPQLTRLD…PITLEKYYKM (157 aa)) form the Tyr recombinase domain. R213 is an active-site residue. The O-(3'-phospho-DNA)-tyrosine intermediate role is filled by Y245.

It belongs to the 'phage' integrase family. XerD-like subfamily.

Its subcellular location is the cytoplasm. Its function is as follows. Putative tyrosine recombinase. Not involved in the cutting and rejoining of the recombining DNA molecules on dif(SL) site. In Streptococcus equi subsp. zooepidemicus (strain H70), this protein is Tyrosine recombinase XerD-like.